The primary structure comprises 363 residues: Uroporphyrinogen decarboxylase (363 aa).

Residues 36–40 (RQAGR), D85, Y160, S215, and H339 each bind substrate.

It belongs to the uroporphyrinogen decarboxylase family. Homodimer.

It localises to the cytoplasm. The enzyme catalyses uroporphyrinogen III + 4 H(+) = coproporphyrinogen III + 4 CO2. The protein operates within porphyrin-containing compound metabolism; protoporphyrin-IX biosynthesis; coproporphyrinogen-III from 5-aminolevulinate: step 4/4. Its function is as follows. Catalyzes the decarboxylation of four acetate groups of uroporphyrinogen-III to yield coproporphyrinogen-III. This Saccharopolyspora erythraea (strain ATCC 11635 / DSM 40517 / JCM 4748 / NBRC 13426 / NCIMB 8594 / NRRL 2338) protein is Uroporphyrinogen decarboxylase.